We begin with the raw amino-acid sequence, 896 residues long: Protein bride of sevenless (896 aa).

The N-terminal stretch at methionine 1 to glutamate 31 is a signal peptide. The Extracellular portion of the chain corresponds to cysteine 32–tryptophan 530. Positions threonine 38–valine 84 are disordered. The segment covering proline 52–isoleucine 64 has biased composition (polar residues). Residues threonine 65–valine 84 are compositionally biased toward low complexity. 4 N-linked (GlcNAc...) asparagine glycosylation sites follow: asparagine 183, asparagine 307, asparagine 474, and asparagine 485. 7 helical membrane passes run valine 531–valine 554, isoleucine 570–isoleucine 588, valine 615–alanine 637, alanine 655–methionine 676, tryptophan 693–isoleucine 712, isoleucine 728–phenylalanine 748, and leucine 759–valine 781. Residues arginine 782–phenylalanine 896 lie on the Cytoplasmic side of the membrane. Disordered stretches follow at residues serine 825 to glycine 844 and alanine 861 to phenylalanine 896. Residues glutamine 874–leucine 884 are compositionally biased toward low complexity.

The protein belongs to the G-protein coupled receptor 3 family. Expressed exclusively by R8 photoreceptor cells and is internalized in a sev-dependent manner by R7 cells.

It localises to the cell membrane. Acts as a ligand for sevenless tyrosine-kinase receptor during eye development. This Drosophila melanogaster (Fruit fly) protein is Protein bride of sevenless (boss).